Reading from the N-terminus, the 337-residue chain is Inositol 2-dehydrogenase (337 aa).

It belongs to the Gfo/Idh/MocA family. Homotetramer.

It catalyses the reaction myo-inositol + NAD(+) = scyllo-inosose + NADH + H(+). Its function is as follows. Involved in the oxidation of myo-inositol (MI) to 2-keto-myo-inositol (2KMI or 2-inosose). The sequence is that of Inositol 2-dehydrogenase from Corynebacterium glutamicum (strain ATCC 13032 / DSM 20300 / JCM 1318 / BCRC 11384 / CCUG 27702 / LMG 3730 / NBRC 12168 / NCIMB 10025 / NRRL B-2784 / 534).